The primary structure comprises 188 residues: Elongation factor P (188 aa).

It belongs to the elongation factor P family.

The protein resides in the cytoplasm. Its pathway is protein biosynthesis; polypeptide chain elongation. Functionally, involved in peptide bond synthesis. Stimulates efficient translation and peptide-bond synthesis on native or reconstituted 70S ribosomes in vitro. Probably functions indirectly by altering the affinity of the ribosome for aminoacyl-tRNA, thus increasing their reactivity as acceptors for peptidyl transferase. The sequence is that of Elongation factor P from Anaplasma phagocytophilum (strain HZ).